The primary structure comprises 101 residues: Integration host factor subunit beta (101 aa).

A disordered region spans residues 58 to 101; sequence ARAGRNPRTGAHVPVDQKSVPFFKTGKEMRERLNRDTGAPDSGA. A compositionally biased stretch (basic and acidic residues) spans 82–92; that stretch reads TGKEMRERLNR.

The protein belongs to the bacterial histone-like protein family. In terms of assembly, heterodimer of an alpha and a beta chain.

This protein is one of the two subunits of integration host factor, a specific DNA-binding protein that functions in genetic recombination as well as in transcriptional and translational control. This is Integration host factor subunit beta from Rhodopseudomonas palustris (strain BisB18).